Reading from the N-terminus, the 828-residue chain is Periplasmic nitrate reductase (828 aa).

Positions 1 to 31 (MKLSRRHFMKANAVAAAAAVAGITIPIAVRA) form a signal peptide, tat-type signal. One can recognise a 4Fe-4S Mo/W bis-MGD-type domain in the interval 39 to 95 (IHWDKAPCRFCGVGCGVLVGTQNGRIVASQGDPDAPVNRGLNCIKGYFLPKIMYGQD). Residues C46, C49, C53, and C81 each contribute to the [4Fe-4S] cluster site. Mo-bis(molybdopterin guanine dinucleotide)-binding positions include K83, Q150, N175, C179, 212 to 219 (WGSNMAEM), 243 to 247 (STYQH), 262 to 264 (QTD), M372, Q376, N482, 508 to 509 (SD), K531, D558, and 718 to 727 (TGRVLEHWHT). F794 is a binding site for substrate. Residues N802 and K819 each coordinate Mo-bis(molybdopterin guanine dinucleotide).

The protein belongs to the prokaryotic molybdopterin-containing oxidoreductase family. NasA/NapA/NarB subfamily. In terms of assembly, component of the periplasmic nitrate reductase NapAB complex composed of NapA and NapB. It depends on [4Fe-4S] cluster as a cofactor. The cofactor is Mo-bis(molybdopterin guanine dinucleotide). Predicted to be exported by the Tat system. The position of the signal peptide cleavage has not been experimentally proven.

The protein resides in the periplasm. It carries out the reaction 2 Fe(II)-[cytochrome] + nitrate + 2 H(+) = 2 Fe(III)-[cytochrome] + nitrite + H2O. Catalytic subunit of the periplasmic nitrate reductase complex NapAB. Receives electrons from NapB and catalyzes the reduction of nitrate to nitrite. The protein is Periplasmic nitrate reductase of Pectobacterium carotovorum subsp. carotovorum (strain PC1).